Consider the following 120-residue polypeptide: Large ribosomal subunit protein bL20 (120 aa).

This sequence belongs to the bacterial ribosomal protein bL20 family.

Its function is as follows. Binds directly to 23S ribosomal RNA and is necessary for the in vitro assembly process of the 50S ribosomal subunit. It is not involved in the protein synthesizing functions of that subunit. The polypeptide is Large ribosomal subunit protein bL20 (Cereibacter sphaeroides (strain ATCC 17029 / ATH 2.4.9) (Rhodobacter sphaeroides)).